Reading from the N-terminus, the 200-residue chain is 7-methyl-GTP pyrophosphatase (200 aa).

Asp69 acts as the Proton acceptor in catalysis.

The protein belongs to the Maf family. YceF subfamily. The cofactor is a divalent metal cation.

It localises to the cytoplasm. The catalysed reaction is N(7)-methyl-GTP + H2O = N(7)-methyl-GMP + diphosphate + H(+). Nucleoside triphosphate pyrophosphatase that hydrolyzes 7-methyl-GTP (m(7)GTP). May have a dual role in cell division arrest and in preventing the incorporation of modified nucleotides into cellular nucleic acids. This is 7-methyl-GTP pyrophosphatase from Colwellia psychrerythraea (strain 34H / ATCC BAA-681) (Vibrio psychroerythus).